The following is a 60-amino-acid chain: Insect toxin mu-NPTX-Nc1a (60 aa).

Positions 1-19 (MIYQVVLLLLVSPAPVSAA) are cleaved as a signal peptide.

In terms of processing, contains 4 disulfide bonds. In terms of tissue distribution, expressed by the venom gland.

It is found in the secreted. Functionally, insect-specific toxin. Blocks voltage-gated potassium and sodium channels. This chain is Insect toxin mu-NPTX-Nc1a, found in Trichonephila clavata (Joro spider).